We begin with the raw amino-acid sequence, 343 residues long: MGEYIMEKNTIILGIETSCDETAVAVVKNGTEIIANVVASQIESHKRFGGVVPEIASRHHVEEITVVLEEALKEANITFDDIDAIAVTEGPGLVGALLIGVNAAKAVAFAHDIPLVGVHHIAGHIYANRLVKEVQFPLLSLVVSGGHTELVYMKEHGSFEVIGETRDDAAGEAYDKVARTLSMPYPGGPHIDRLAHEGEPTIDLPRAWLEPDSYDFSFSGLKSAVINTVHNAKQRGIEIAPEDLAASFQESVIDVLVTKAARAAEAYNVKQLLLAGGVAANKGLRARLEEEFAQKENIELIIPPLSLCTDNAAMIAAAGTIAYEQGKRATLALNANPGLDIEA.

Fe cation-binding residues include histidine 120 and histidine 124. Substrate-binding positions include 142-146 (VVSGG), aspartate 175, glycine 188, aspartate 192, and asparagine 281. Residue aspartate 310 participates in Fe cation binding.

It belongs to the KAE1 / TsaD family. It depends on Fe(2+) as a cofactor.

The protein localises to the cytoplasm. It catalyses the reaction L-threonylcarbamoyladenylate + adenosine(37) in tRNA = N(6)-L-threonylcarbamoyladenosine(37) in tRNA + AMP + H(+). Its function is as follows. Required for the formation of a threonylcarbamoyl group on adenosine at position 37 (t(6)A37) in tRNAs that read codons beginning with adenine. Is involved in the transfer of the threonylcarbamoyl moiety of threonylcarbamoyl-AMP (TC-AMP) to the N6 group of A37, together with TsaE and TsaB. TsaD likely plays a direct catalytic role in this reaction. In Bacillus cereus (strain ATCC 14579 / DSM 31 / CCUG 7414 / JCM 2152 / NBRC 15305 / NCIMB 9373 / NCTC 2599 / NRRL B-3711), this protein is tRNA N6-adenosine threonylcarbamoyltransferase.